We begin with the raw amino-acid sequence, 361 residues long: tRNA 2-selenouridine synthase (361 aa).

The Rhodanese domain occupies 11 to 134 (ALLERPLIDV…MRQCVNAEIE (124 aa)). Cys-94 serves as the catalytic S-selanylcysteine intermediate.

This sequence belongs to the SelU family. As to quaternary structure, monomer.

It catalyses the reaction 5-methylaminomethyl-2-thiouridine(34) in tRNA + selenophosphate + (2E)-geranyl diphosphate + H2O + H(+) = 5-methylaminomethyl-2-selenouridine(34) in tRNA + (2E)-thiogeraniol + phosphate + diphosphate. The catalysed reaction is 5-methylaminomethyl-2-thiouridine(34) in tRNA + (2E)-geranyl diphosphate = 5-methylaminomethyl-S-(2E)-geranyl-thiouridine(34) in tRNA + diphosphate. The enzyme catalyses 5-methylaminomethyl-S-(2E)-geranyl-thiouridine(34) in tRNA + selenophosphate + H(+) = 5-methylaminomethyl-2-(Se-phospho)selenouridine(34) in tRNA + (2E)-thiogeraniol. It carries out the reaction 5-methylaminomethyl-2-(Se-phospho)selenouridine(34) in tRNA + H2O = 5-methylaminomethyl-2-selenouridine(34) in tRNA + phosphate. Involved in the post-transcriptional modification of the uridine at the wobble position (U34) of tRNA(Lys), tRNA(Glu) and tRNA(Gln). Catalyzes the conversion of 2-thiouridine (S2U-RNA) to 2-selenouridine (Se2U-RNA). Acts in a two-step process involving geranylation of 2-thiouridine (S2U) to S-geranyl-2-thiouridine (geS2U) and subsequent selenation of the latter derivative to 2-selenouridine (Se2U) in the tRNA chain. The chain is tRNA 2-selenouridine synthase from Chromohalobacter salexigens (strain ATCC BAA-138 / DSM 3043 / CIP 106854 / NCIMB 13768 / 1H11).